Reading from the N-terminus, the 659-residue chain is Sodium/nucleoside cotransporter 2 (659 aa).

Basic and acidic residues predominate over residues 1–10 (MAKSEGRKSA). The disordered stretch occupies residues 1–22 (MAKSEGRKSASQDTSENGMENP). Residue serine 46 is modified to Phosphoserine. The next 14 helical transmembrane spans lie at 81–101 (ILLG…CILN), 105–124 (ALAL…CHFL), 149–167 (KRVF…LALD), 173–193 (EQLI…ACSK), 201–221 (RTVF…IRTE), 234–254 (IQIF…DTLV), 261–281 (QSLP…YLGL), 296–315 (TMGT…FVGM), 337–356 (VMTG…FISF), 363–382 (LISA…KLVY), 424–444 (VAAN…TLSW), 455–475 (TFQV…GVQW), 530–550 (ATFS…LGGL), and 568–588 (ALFT…ILYV).

This sequence belongs to the concentrative nucleoside transporter (CNT) (TC 2.A.41) family. As to expression, expressed in liver (in bile canalicular membrane vesicles (CMV) but not in sinusoidal vesicles), jejunum, spleen and heart. Also expressed in brain and skeletal muscle. Not expressed in kidney, muscle and lung.

It localises to the membrane. The protein localises to the apicolateral cell membrane. The catalysed reaction is adenosine(out) + Na(+)(out) = adenosine(in) + Na(+)(in). The enzyme catalyses inosine(out) + Na(+)(out) = inosine(in) + Na(+)(in). It catalyses the reaction guanosine(out) + Na(+)(out) = guanosine(in) + Na(+)(in). It carries out the reaction uridine(out) + Na(+)(out) = uridine(in) + Na(+)(in). Inhibited by formycin B, partially inhibited by purine analog ara-A. Its function is as follows. Sodium-dependent and purine-selective. Exhibits the transport characteristics of the nucleoside transport system cif or N1 subtype (N1/cif) (selective for purine nucleosides and uridine). Accepts purine, analogs of purine nucleosides and uridine, and exhibits high affinity for adenosine. May contribute to regulate the transport of organic compounds in testes across the blood-testis-barrier. The protein is Sodium/nucleoside cotransporter 2 (Slc28a2) of Rattus norvegicus (Rat).